The chain runs to 152 residues: Transcriptional regulator MraZ (152 aa).

2 consecutive SpoVT-AbrB domains span residues 5–52 (HSNR…PMPE) and 81–124 (ATEV…DQGR).

The protein belongs to the MraZ family. As to quaternary structure, forms oligomers.

The protein localises to the cytoplasm. Its subcellular location is the nucleoid. This is Transcriptional regulator MraZ from Solidesulfovibrio magneticus (strain ATCC 700980 / DSM 13731 / RS-1) (Desulfovibrio magneticus).